The following is a 215-amino-acid chain: Cytochrome b6 (215 aa).

A helical transmembrane segment spans residues 32-52 (IFYCLGGITFTSFLVQVATGF). Cysteine 35 serves as a coordination point for heme c. Residues histidine 86 and histidine 100 each coordinate heme b. Transmembrane regions (helical) follow at residues 90-110 (ASMM…TGGF), 116-136 (LTWV…VTGY), and 186-206 (LHTF…FLMI). Heme b contacts are provided by histidine 187 and histidine 202.

This sequence belongs to the cytochrome b family. PetB subfamily. The 4 large subunits of the cytochrome b6-f complex are cytochrome b6, subunit IV (17 kDa polypeptide, PetD), cytochrome f and the Rieske protein, while the 4 small subunits are PetG, PetL, PetM and PetN. The complex functions as a dimer. Heme b serves as cofactor. The cofactor is heme c.

Its subcellular location is the plastid. The protein resides in the chloroplast thylakoid membrane. Component of the cytochrome b6-f complex, which mediates electron transfer between photosystem II (PSII) and photosystem I (PSI), cyclic electron flow around PSI, and state transitions. This is Cytochrome b6 from Oltmannsiellopsis viridis (Marine flagellate).